Reading from the N-terminus, the 143-residue chain is Submaxillary gland androgen-regulated protein 2, isoform delta (143 aa).

The N-terminal stretch at Met-1 to Cys-22 is a signal peptide. 2 disordered regions span residues Gly-28–Asn-52 and Val-116–Phe-143. 2 stretches are compositionally biased toward polar residues: residues Leu-36–Phe-45 and Asn-122–Phe-143.

The protein localises to the secreted. Its function is as follows. May play a role in protection or detoxification. The sequence is that of Submaxillary gland androgen-regulated protein 2, isoform delta (Smr2) from Mus musculus (Mouse).